The primary structure comprises 252 residues: 1-(5-phosphoribosyl)-5-[(5-phosphoribosylamino)methylideneamino] imidazole-4-carboxamide isomerase (252 aa).

Aspartate 10 (proton acceptor) is an active-site residue. The active-site Proton donor is the aspartate 129.

This sequence belongs to the HisA/HisF family.

It localises to the cytoplasm. It catalyses the reaction 1-(5-phospho-beta-D-ribosyl)-5-[(5-phospho-beta-D-ribosylamino)methylideneamino]imidazole-4-carboxamide = 5-[(5-phospho-1-deoxy-D-ribulos-1-ylimino)methylamino]-1-(5-phospho-beta-D-ribosyl)imidazole-4-carboxamide. Its pathway is amino-acid biosynthesis; L-histidine biosynthesis; L-histidine from 5-phospho-alpha-D-ribose 1-diphosphate: step 4/9. The polypeptide is 1-(5-phosphoribosyl)-5-[(5-phosphoribosylamino)methylideneamino] imidazole-4-carboxamide isomerase (Frankia casuarinae (strain DSM 45818 / CECT 9043 / HFP020203 / CcI3)).